A 298-amino-acid chain; its full sequence is HTH-type transcriptional regulator ArgP (298 aa).

In terms of domain architecture, HTH lysR-type spans leucine 4–threonine 60. A DNA-binding region (H-T-H motif) is located at residues phenylalanine 21 to lysine 40.

The protein belongs to the LysR transcriptional regulatory family. As to quaternary structure, homodimer.

Functionally, controls the transcription of genes involved in arginine and lysine metabolism. The polypeptide is HTH-type transcriptional regulator ArgP (Vibrio cholerae serotype O1 (strain ATCC 39541 / Classical Ogawa 395 / O395)).